A 183-amino-acid polypeptide reads, in one-letter code: UPF0316 protein EF_1609 (183 aa).

3 helical membrane passes run 1 to 21, 35 to 55, and 62 to 82; these read MVVD…YITL, VIAP…LSMV, and PLNL…GIKI.

Belongs to the UPF0316 family.

Its subcellular location is the cell membrane. This chain is UPF0316 protein EF_1609, found in Enterococcus faecalis (strain ATCC 700802 / V583).